Here is a 677-residue protein sequence, read N- to C-terminus: MAAHHRQNTAGRRKVQVSYVIRDEVEKYNRNGVNALQLDPALNRLFTAGRDSIIRIWSVNQHKQDPYIASMEHHTDWVNDIVLCCNGKTLISASSDTTVKVWNAHKGFCMSTLRTHKDYVKALAYAKDKELVASAGLDRQIFLWDVNTLTALTASNNTVTTSSLSGNKDSIYSLAMNQLGTIIVSGSTEKVLRVWDPRTCAKLMKLKGHTDNVKALLLNRDGTQCLSGSSDGTIRLWSLGQQRCIATYRVHDEGVWALQVNDAFTHVYSGGRDRKIYCTDLRNPDIRVLICEEKAPVLKMELDRSADPPPAIWVATTKSTVNKWTLKGIHNFRASGDYDNDCTNPITPLCTQPDQVIKGGASIIQCHILNDKRHLLTKDTNNNVAYWDVLKACKVEDLGKVDFEDEIKKRFKMVYVPNWFSVDLKTGMLTITLDESDCFAAWVSAKDAGFSSPDGSDPKLNLGGLLLQALLEYWPRTHVNPIDEEENEVNHVNGEQENRVQKGNGYFQVPPHTPVIFGEAGGRTLFRLLCRDSGGETESMLLNETVPQWVIDITVDKNMPKFNKIPFYLQPHASSGAKTLKKDRLSASDMLQVRKVMEHVYEKIINLDNESQTTSSSNNEKPGEQEKEEDIAVLAEEKIELLCQDQVLDPNMDLRTVKHFIWKSGGDLTLHYRQKST.

Tyrosine 28 carries the phosphotyrosine modification. WD repeat units lie at residues 28–67, 73–112, 115–154, 166–205, 208–247, 250–289, 292–334, and 358–397; these read YNRN…QDPY, HHTD…CMST, THKD…ALTA, GNKD…KLMK, GHTD…CIAT, VHDE…IRVL, EEKA…NFRA, and KGGA…KVED. At lysine 214 the chain carries N6-acetyllysine. Lysine 578 is modified (N6-acetyllysine). A disordered region spans residues 607–628; it reads LDNESQTTSSSNNEKPGEQEKE. A compositionally biased stretch (low complexity) spans 609–620; it reads NESQTTSSSNNE. Threonine 613 carries the phosphothreonine modification.

Belongs to the WD repeat WDR48 family. In terms of assembly, interacts with USP46. Interacts with USP1. Interacts with USP12. Component of the USP12-WDR20-WDR48 deubiquitinating complex. Component of the USP12-DMWD-WDR48 deubiquitinating complex. Interacts with PHLPP1. Interacts with RAD51AP1; the interaction is direct and promotes formation of a trimeric complex with RAD51 via RAD51AP1. Interacts with ATAD5; the interaction regulates USP1-mediated PCNA deubiquitination. Interacts with RAD51; the interaction is enhanced under replication stress. Interacts with ITCH; the interaction is more efficient when both USP12 and WDR48/UAF1 are involved and may facilitate recruitment of the USP12 deubiquitinating complex to Notch.

The protein localises to the nucleus. It is found in the cytoplasm. Its subcellular location is the lysosome. The protein resides in the late endosome. Functionally, regulator of deubiquitinating complexes, which acts as a strong activator of USP1, USP12 and USP46. Enhances the USP1-mediated deubiquitination of FANCD2; USP1 being almost inactive by itself. Activates deubiquitination by increasing the catalytic turnover without increasing the affinity of deubiquitinating enzymes for the substrate. Also activates deubiquitinating activity of complexes containing USP12. Docks at the distal end of the USP12 fingers domain and induces a cascade of structural changes leading to the activation of the enzyme. Together with RAD51AP1, promotes DNA repair by stimulating RAD51-mediated homologous recombination. Binds single-stranded DNA (ssDNA) and double-stranded DNA (dsDNA). DNA-binding is required both for USP1-mediated deubiquitination of FANCD2 and stimulation of RAD51-mediated homologous recombination: both WDR48/UAF1 and RAD51AP1 have coordinated role in DNA-binding during these processes. Together with ATAD5 and by regulating USP1 activity, has a role in PCNA-mediated translesion synthesis (TLS) by deubiquitinating monoubiquitinated PCNA. Together with ATAD5, has a role in recruiting RAD51 to stalled forks during replication stress. The protein is WD repeat-containing protein 48 (WDR48) of Bos taurus (Bovine).